The primary structure comprises 284 residues: Diaminopimelate epimerase (284 aa).

Substrate-binding residues include asparagine 13 and asparagine 66. Residue cysteine 75 is the Proton donor of the active site. Residues 76 to 77, asparagine 166, asparagine 199, and 217 to 218 contribute to the substrate site; these read GN and ER. Catalysis depends on cysteine 226, which acts as the Proton acceptor. A substrate-binding site is contributed by 227-228; sequence GT.

It belongs to the diaminopimelate epimerase family. In terms of assembly, homodimer.

It is found in the cytoplasm. It carries out the reaction (2S,6S)-2,6-diaminopimelate = meso-2,6-diaminopimelate. The protein operates within amino-acid biosynthesis; L-lysine biosynthesis via DAP pathway; DL-2,6-diaminopimelate from LL-2,6-diaminopimelate: step 1/1. Functionally, catalyzes the stereoinversion of LL-2,6-diaminopimelate (L,L-DAP) to meso-diaminopimelate (meso-DAP), a precursor of L-lysine and an essential component of the bacterial peptidoglycan. The sequence is that of Diaminopimelate epimerase from Halothermothrix orenii (strain H 168 / OCM 544 / DSM 9562).